A 304-amino-acid chain; its full sequence is uncharacterized protein (304 aa).

The protein belongs to the histone deacetylase family.

Its function is as follows. Putative deacetylase. This is an uncharacterized protein from Synechocystis sp. (strain ATCC 27184 / PCC 6803 / Kazusa).